Reading from the N-terminus, the 482-residue chain is tRNA sulfurtransferase (482 aa).

The 105-residue stretch at 61–165 folds into the THUMP domain; sequence AEVLEILTHT…NDRLNQVLAS (105 aa). ATP is bound by residues 183–184, Lys265, Gly287, and Gln296; that span reads LI. A disulfide bridge connects residues Cys344 and Cys456. A Rhodanese domain is found at 404–482; sequence VEEHAIVLDI…GFNNVKVYRP (79 aa). Residue Cys456 is the Cysteine persulfide intermediate of the active site.

This sequence belongs to the ThiI family.

Its subcellular location is the cytoplasm. The catalysed reaction is [ThiI sulfur-carrier protein]-S-sulfanyl-L-cysteine + a uridine in tRNA + 2 reduced [2Fe-2S]-[ferredoxin] + ATP + H(+) = [ThiI sulfur-carrier protein]-L-cysteine + a 4-thiouridine in tRNA + 2 oxidized [2Fe-2S]-[ferredoxin] + AMP + diphosphate. It catalyses the reaction [ThiS sulfur-carrier protein]-C-terminal Gly-Gly-AMP + S-sulfanyl-L-cysteinyl-[cysteine desulfurase] + AH2 = [ThiS sulfur-carrier protein]-C-terminal-Gly-aminoethanethioate + L-cysteinyl-[cysteine desulfurase] + A + AMP + 2 H(+). Its pathway is cofactor biosynthesis; thiamine diphosphate biosynthesis. Functionally, catalyzes the ATP-dependent transfer of a sulfur to tRNA to produce 4-thiouridine in position 8 of tRNAs, which functions as a near-UV photosensor. Also catalyzes the transfer of sulfur to the sulfur carrier protein ThiS, forming ThiS-thiocarboxylate. This is a step in the synthesis of thiazole, in the thiamine biosynthesis pathway. The sulfur is donated as persulfide by IscS. In Vibrio campbellii (strain ATCC BAA-1116), this protein is tRNA sulfurtransferase.